The following is a 765-amino-acid chain: MKWLCSVGIAVSLALQPALADDLFGNHPLTPEARDAFVTELLKKMTVDEKIGQLRLISVGPDNPKEAIREMIKDGQVGAIFNTVTRQDIRAMQDQVMELSRLKIPLFFAYDVLHGQRTVFPISLGLASSFNLDAVKTVGRVSAYEAADDGLNMTWAPMVDVSRDPRWGRASEGFGEDTYLTSTMGKTMVEAMQGKSPADRYSVMTSVKHFAAYGAVEGGKEYNTVDMSPQRLFNDYMPPYKAGLDAGSGAVMVALNSLNGTPATSDSWLLKDVLRDQWGFKGITVSDHGAIKELIKHGTAADPEDAVRVALKSGINMSMSDEYYSKYLPGLIKSGKVTMAELDDAARHVLNVKYDMGLFNDPYSHLGPKESDPVDTNAESRLHRKEAREVARESLVLLKNRLETLPLKKSATIAVVGPLADSKRDVMGSWSAAGVADQSVTVLTGIKNAVGENGKVLYAKGANVTSDKGIIDFLNQYEEAVKVDPRSPQEMIDEAVQTAKQSDVVVAVVGEAQGMAHEASSRTDITIPQSQRDLIAALKATGKPLVLVLMNGRPLALVKEDQQADAILETWFAGTEGGNAIADVLFGDYNPSGKLPMSFPRSVGQIPVYYSHLNTGRPYNADKPNKYTSRYFDEANGALYPFGYGLSYTTFTVSDVKLSAPTMKRDGKVTASVQVTNTGKREGATVVQMYLQDVTASMSRPVKQLKGFEKITLKPGETQTVSFPIDIEALKFWNQQMKYDAEPGKFNVFIGTDSARVKKGEFELL.

The signal sequence occupies residues 1 to 20 (MKWLCSVGIAVSLALQPALA). Residue Asp287 is part of the active site.

Belongs to the glycosyl hydrolase 3 family.

Its subcellular location is the periplasm. The enzyme catalyses Hydrolysis of terminal, non-reducing beta-D-glucosyl residues with release of beta-D-glucose.. This is Periplasmic beta-glucosidase (bglX) from Escherichia coli (strain K12).